Here is a 712-residue protein sequence, read N- to C-terminus: Polyribonucleotide nucleotidyltransferase (712 aa).

Positions 487 and 493 each coordinate Mg(2+). In terms of domain architecture, KH spans 554–613; that stretch reads PKILTMQINPEKIREVIGPSGKQINKIIDETGVKIDIEQDGTIFISSVNEAMNQKAKQII. An S1 motif domain is found at 623-691; the sequence is GQIYLGKVKR…KQGRVNLSRK (69 aa).

This sequence belongs to the polyribonucleotide nucleotidyltransferase family. Mg(2+) is required as a cofactor.

The protein localises to the cytoplasm. It carries out the reaction RNA(n+1) + phosphate = RNA(n) + a ribonucleoside 5'-diphosphate. Involved in mRNA degradation. Catalyzes the phosphorolysis of single-stranded polyribonucleotides processively in the 3'- to 5'-direction. This Geobacillus sp. (strain WCH70) protein is Polyribonucleotide nucleotidyltransferase.